Reading from the N-terminus, the 123-residue chain is Iron-sulfur cluster insertion protein ErpA (123 aa).

Iron-sulfur cluster is bound by residues Cys51, Cys115, and Cys117.

Belongs to the HesB/IscA family. As to quaternary structure, homodimer. It depends on iron-sulfur cluster as a cofactor.

Functionally, required for insertion of 4Fe-4S clusters for at least IspG. The polypeptide is Iron-sulfur cluster insertion protein ErpA (Halorhodospira halophila (strain DSM 244 / SL1) (Ectothiorhodospira halophila (strain DSM 244 / SL1))).